We begin with the raw amino-acid sequence, 450 residues long: Phosphoglucosamine mutase (450 aa).

Ser-102 serves as the catalytic Phosphoserine intermediate. 4 residues coordinate Mg(2+): Ser-102, Asp-243, Asp-245, and Asp-247. Position 102 is a phosphoserine (Ser-102).

Belongs to the phosphohexose mutase family. Mg(2+) serves as cofactor. Post-translationally, activated by phosphorylation.

The catalysed reaction is alpha-D-glucosamine 1-phosphate = D-glucosamine 6-phosphate. Its function is as follows. Catalyzes the conversion of glucosamine-6-phosphate to glucosamine-1-phosphate. The polypeptide is Phosphoglucosamine mutase (Rhizobium etli (strain CIAT 652)).